The following is a 197-amino-acid chain: Proteinase inhibitor type-2 (197 aa).

An N-terminal signal peptide occupies residues methionine 1–alanine 24. 3 consecutive repeat copies span residues alanine 24–asparagine 80, proline 81–lysine 140, and serine 141–alanine 196. Disulfide bonds link cysteine 27-cysteine 115, cysteine 31-cysteine 111, cysteine 39-cysteine 121, cysteine 51-cysteine 88, cysteine 54-cysteine 72, cysteine 55-cysteine 84, cysteine 61-cysteine 97, and cysteine 114-cysteine 132.

It belongs to the protease inhibitor I20 (potato type II proteinase inhibitor) family.

The sequence is that of Proteinase inhibitor type-2 from Nicotiana tabacum (Common tobacco).